Here is a 38-residue protein sequence, read N- to C-terminus: Potassium channel toxin alpha-KTx 6.4 (38 aa).

Intrachain disulfides connect Cys-6–Cys-27, Cys-12–Cys-32, Cys-16–Cys-34, and Cys-22–Cys-37.

It belongs to the short scorpion toxin superfamily. Potassium channel inhibitor family. Alpha-KTx 06 subfamily. As to expression, expressed by the venom gland.

It localises to the secreted. Its function is as follows. Potently, completely and reversibly blocks voltage-gated potassium channel Kv1.2/KCNA2 and Shaker B (Sh). Also blocks small conductance (SK) calcium-activated potassium channel (KCNN). This Pandinus imperator (Emperor scorpion) protein is Potassium channel toxin alpha-KTx 6.4.